Here is a 218-residue protein sequence, read N- to C-terminus: TPA-induced transmembrane protein homolog (218 aa).

The disordered stretch occupies residues 1-54; it reads MEEGSRSQSPREELELSMLDGPQEELTPLNNDLRIQPNSAEDPSPAQVGKESPW. The chain crosses the membrane as a helical span at residues 66 to 86; the sequence is KLWMVIVTIFLCFIIVIVISL.

It localises to the endoplasmic reticulum membrane. The protein is TPA-induced transmembrane protein homolog of Mus musculus (Mouse).